A 596-amino-acid chain; its full sequence is Transketolase-like protein 1 (596 aa).

His-46 provides a ligand contact to substrate. Residues Ser-49 and 94-96 (GWL) contribute to the thiamine diphosphate site. Asp-126 contributes to the Mg(2+) binding site. Thiamine diphosphate is bound by residues Gly-127 and Asn-156. Mg(2+) is bound by residues Asn-156 and Leu-158. Residues Lys-218 and His-232 each coordinate thiamine diphosphate. Residues His-232, Arg-292, and Ser-319 each coordinate substrate. Residues Glu-340 and Phe-366 each coordinate thiamine diphosphate. Glu-340 acts as the Proton donor in catalysis. Substrate contacts are provided by His-390 and Asp-398. Gln-402 contacts thiamine diphosphate. Arg-448 contributes to the substrate binding site.

This sequence belongs to the transketolase family. Homodimer. Mg(2+) serves as cofactor. It depends on Ca(2+) as a cofactor. Requires Mn(2+) as cofactor. Co(2+) is required as a cofactor. The cofactor is thiamine diphosphate.

The protein localises to the cytoplasm. The catalysed reaction is D-sedoheptulose 7-phosphate + D-glyceraldehyde 3-phosphate = aldehydo-D-ribose 5-phosphate + D-xylulose 5-phosphate. In terms of biological role, catalyzes the transfer of a two-carbon ketol group from a ketose donor to an aldose acceptor, via a covalent intermediate with the cofactor thiamine pyrophosphate. The polypeptide is Transketolase-like protein 1 (TKTL1) (Macaca fascicularis (Crab-eating macaque)).